A 143-amino-acid chain; its full sequence is uncharacterized protein (143 aa).

Residues 35–59 (ITKDRGDRDDGRYGEPRIQRKPGQL) are disordered. Basic and acidic residues predominate over residues 36 to 52 (TKDRGDRDDGRYGEPRI).

This is an uncharacterized protein from Streptomyces fradiae (Streptomyces roseoflavus).